The sequence spans 499 residues: Glycerol kinase (499 aa).

Position 12 (Thr12) interacts with ADP. Residues Thr12, Thr13, and Ser14 each coordinate ATP. A sn-glycerol 3-phosphate-binding site is contributed by Thr12. Arg16 contributes to the ADP binding site. Sn-glycerol 3-phosphate is bound by residues Arg82, Glu83, Tyr134, and Asp243. Arg82, Glu83, Tyr134, Asp243, and Gln244 together coordinate glycerol. 2 residues coordinate ADP: Thr265 and Gly308. Positions 265, 308, 312, and 411 each coordinate ATP. Position 411 (Gly411) interacts with ADP.

The protein belongs to the FGGY kinase family.

It catalyses the reaction glycerol + ATP = sn-glycerol 3-phosphate + ADP + H(+). Its pathway is polyol metabolism; glycerol degradation via glycerol kinase pathway; sn-glycerol 3-phosphate from glycerol: step 1/1. Inhibited by fructose 1,6-bisphosphate (FBP). In terms of biological role, key enzyme in the regulation of glycerol uptake and metabolism. Catalyzes the phosphorylation of glycerol to yield sn-glycerol 3-phosphate. The protein is Glycerol kinase of Agrobacterium fabrum (strain C58 / ATCC 33970) (Agrobacterium tumefaciens (strain C58)).